We begin with the raw amino-acid sequence, 148 residues long: Transcriptional regulator MraZ (148 aa).

SpoVT-AbrB domains lie at 5–51 (STQL…PQPV) and 80–123 (ACDV…DMAK).

The protein belongs to the MraZ family. As to quaternary structure, forms oligomers.

The protein localises to the cytoplasm. It localises to the nucleoid. In Nitrosomonas eutropha (strain DSM 101675 / C91 / Nm57), this protein is Transcriptional regulator MraZ.